A 340-amino-acid chain; its full sequence is Toxin coregulated pilus biosynthesis protein E (340 aa).

3 helical membrane passes run 108 to 131, 146 to 161, and 312 to 333; these read AISS…GYSV, WPGV…FSLY, and NISL…FSLV.

This sequence belongs to the GSP F family.

It is found in the cell inner membrane. Functionally, probably involved in cholera toxin receptor (GM1) interaction in order to bring the cells within close proximity of the ganglioside for efficient toxin delivery. This Vibrio cholerae serotype O1 (strain ATCC 39315 / El Tor Inaba N16961) protein is Toxin coregulated pilus biosynthesis protein E (tcpE).